Here is a 143-residue protein sequence, read N- to C-terminus: Small ribosomal subunit protein eS12 (143 aa).

Belongs to the eukaryotic ribosomal protein eS12 family.

The polypeptide is Small ribosomal subunit protein eS12 (RPS12) (Hordeum vulgare (Barley)).